The sequence spans 834 residues: Enhancer of filamentation 1 (834 aa).

The tract at residues Met-1–Asp-505 is required for interaction with ITCH. The region spanning Tyr-3 to Gly-65 is the SH3 domain. Phosphotyrosine; by ABL1 occurs at positions 92, 164, 166, 177, 189, 214, and 223. Residues Arg-102–Ala-229 form an interacts strongly with spindle-regulatory protein D1M1 region. A disordered region spans residues Glu-238–Val-260. Tyr-279 carries the phosphotyrosine; by ABL1 modification. The disordered stretch occupies residues Ala-291–Ala-316. Ser-296 is subject to Phosphoserine. The segment covering Leu-306 to Asp-315 has biased composition (polar residues). Tyr-317 is subject to Phosphotyrosine; by ABL1. Disordered stretches follow at residues Pro-328–Gln-398 and Gly-560–Arg-623. Basic and acidic residues predominate over residues Thr-332–Val-344. Residues Asn-351 to Phe-834 form an interacts with CTTN region. The Caspase cleavage related site motif lies at Asp-360 to Asp-363. Ser-369 carries the phosphoserine modification. Over residues Ser-369–Ser-395 the composition is skewed to low complexity. Residues Phe-710–Gly-760 form a divergent helix-loop-helix motif region. The tract at residues Phe-710–Phe-834 is required for interaction with PLK1. Position 780 is a phosphoserine; by CSNK1D and CSNK1E (Ser-780). Thr-804 bears the Phosphothreonine; by CSNK1E mark.

The protein belongs to the CAS family. In terms of assembly, homodimer. Forms heterodimers with BCAR1/p130cas. Forms complexes with PTK2B/RAFTK, adapter protein CRKL and LYN kinase. Part of a complex composed of NEDD9, AURKA and CTTN; within the complex NEDD9 acts as a scaffold protein and is required for complex formation. Part of a ternary complex composed of SMAD3, ITCH/AIP4 and NEDD9/HEF1; within the complex NEDD9/HEF1 interacts (via N-terminus) with ITCH/AIP4 (via WW domains); the complex mediates ubiquitination and proteasomal degradation of NEDD9/HEF1. Interacts with SMAD3; the interaction promotes NEDD9 ubiquitination and proteasomal degradation. Interacts with ID2. Interacts with CTTN (via N-terminus). Interacts with MICAL. Interacts with TXNL4/DIM1. Interacts with BCAR3 (via Ras-GEF domain). Interacts with SH2D3C isoform 1 and isoform 2. Interacts with ECT2. Interacts with PTPN11/SHP-2 (via SH2 domains); the interaction is enhanced when NEDD9/CAS-L is tyrosine phosphorylated. Interacts (via C-terminus) with PLK1 (via polo box domains). Interacts with NKX2-5. Interacts with SMAD3; the interaction is inhibited by oxidation of NEDD9. Interacts with NEDD9/HEF1; interaction is induced by CXCL12 promotion of ABL-mediated phosphorylation of NEDD9/HEF1. Interacts (via SH3 domain) with PTK2/FAK. Interacts with FYN; in the presence of PTK2. Interacts with INPPL1/SHIP2. Post-translationally, cell cycle-regulated processing produces four isoforms: p115, p105, p65, and p55. Isoform p115 arises from p105 phosphorylation and appears later in the cell cycle. Isoform p55 arises from p105 as a result of cleavage at a caspase cleavage-related site and it appears specifically at mitosis. The p65 isoform is poorly detected. In terms of processing, polyubiquitinated by ITCH/AIP4, leading to proteasomal degradation. PTK2/FAK1 phosphorylates the protein at the YDYVHL motif (conserved among all cas proteins) following integrin stimulation. The SRC family kinases (FYN, SRC, LCK and CRK) are recruited to the phosphorylated sites and can phosphorylate other tyrosine residues. Ligation of either integrin beta-1 or B-cell antigen receptor on tonsillar B-cells and B-cell lines promotes tyrosine phosphorylation and both integrin and BCR-mediated tyrosine phosphorylation requires an intact actin network. Phosphorylation is required to recruit NEDD9 to T-cell receptor microclusters at the periphery of newly formed immunological synapses. In fibroblasts transformation with oncogene v-ABL results in an increase in tyrosine phosphorylation. Transiently phosphorylated following CD3 cross-linking and this phosphorylated form binds to CRKL and C3G. A mutant lacking the SH3 domain is phosphorylated upon CD3 cross-linking but not upon integrin beta-1 cross-linking. Tyrosine phosphorylation occurs upon stimulation of the G-protein coupled C1a calcitonin receptor. Calcitonin-stimulated tyrosine phosphorylation is mediated by calcium- and protein kinase C-dependent mechanisms and requires the integrity of the actin cytoskeleton. Phosphorylation at Ser-369 induces proteasomal degradation. Phosphorylated by LYN. Phosphorylation at Ser-780 by CSNK1D or CSNK1E, or phosphorylation of Thr-804 by CSNK1E enhances the interaction of NEDD9 with PLK1. In terms of tissue distribution, expressed in B-cells (at protein level). Expressed in the respiratory epithelium of the main bronchi to the bronchioles in the lungs (at protein level). High levels detected in kidney, lung, and placenta. Expressed in lymphocytes.

It is found in the cytoplasm. It localises to the cell cortex. Its subcellular location is the nucleus. The protein resides in the golgi apparatus. The protein localises to the cell projection. It is found in the lamellipodium. It localises to the cell junction. Its subcellular location is the focal adhesion. The protein resides in the cytoskeleton. The protein localises to the spindle pole. It is found in the cilium. It localises to the cilium basal body. Its subcellular location is the basolateral cell membrane. The protein resides in the spindle. In terms of biological role, scaffolding protein which plays a central coordinating role for tyrosine-kinase-based signaling related to cell adhesion. As a focal adhesion protein, plays a role in embryonic fibroblast migration. May play an important role in integrin beta-1 or B cell antigen receptor (BCR) mediated signaling in B- and T-cells. Integrin beta-1 stimulation leads to recruitment of various proteins including CRKL and SHPTP2 to the tyrosine phosphorylated form. Promotes adhesion and migration of lymphocytes; as a result required for the correct migration of lymphocytes to the spleen and other secondary lymphoid organs. Plays a role in the organization of T-cell F-actin cortical cytoskeleton and the centralization of T-cell receptor microclusters at the immunological synapse. Negatively regulates cilia outgrowth in polarized cysts. Modulates cilia disassembly via activation of AURKA-mediated phosphorylation of HDAC6 and subsequent deacetylation of alpha-tubulin. Positively regulates RANKL-induced osteoclastogenesis. Required for the maintenance of hippocampal dendritic spines in the dentate gyrus and CA1 regions, thereby involved in spatial learning and memory. The protein is Enhancer of filamentation 1 of Homo sapiens (Human).